The following is a 910-amino-acid chain: ZZ-type zinc finger-containing protein 3 (910 aa).

Disordered stretches follow at residues 41-117 and 133-153; these read AHPE…RQAE and EATN…PGEH. Polar residues predominate over residues 67–84; it reads QKGTNNGRTSDVRQQSAR. 5 positions are modified to phosphoserine: Ser89, Ser96, Ser137, Ser138, and Ser142. The span at 96–116 shows a compositional bias: basic and acidic residues; sequence SSSEKDDLERQALESCERRQA. Over residues 142-153 the composition is skewed to basic and acidic residues; it reads SPVKPDKEPGEH. Residue Lys283 forms a Glycyl lysine isopeptide (Lys-Gly) (interchain with G-Cter in SUMO2) linkage. Disordered stretches follow at residues 303-358, 373-444, and 609-641; these read TAES…VSGE, TSLS…PQDG, and ARPK…SHNR. 2 stretches are compositionally biased toward polar residues: residues 331–347 and 397–434; these read SSAS…NPLD and SSPT…SESP. N6-acetyllysine is present on Lys401. Ser613 is subject to Phosphoserine. Positions 613–622 are enriched in basic and acidic residues; it reads SPLDPKKDGE. A Glycyl lysine isopeptide (Lys-Gly) (interchain with G-Cter in SUMO2) cross-link involves residue Lys654. The 61-residue stretch at 654–714 folds into the HTH myb-type domain; that stretch reads KPETFNQLWT…RVQKYFIKLT (61 aa). The H-T-H motif DNA-binding region spans 687 to 710; the sequence is WQKIADELGNRTAKQVASRVQKYF. An N6-acetyllysine modification is found at Lys708. Lys715 participates in a covalent cross-link: Glycyl lysine isopeptide (Lys-Gly) (interchain with G-Cter in SUMO2). The ZZ-type zinc finger occupies 825 to 884; it reads HVGFKCDNCGVEPIQGVRWHCQDCPPEMSLDFCDSCSDCPHETDIHKEDHQLEPVYKSET. Residues Cys830, Cys833, Cys845, Cys848, Cys857, Cys860, His870, and His874 each contribute to the Zn(2+) site.

Component of the ADA2A-containing complex (ATAC), composed of KAT14, KAT2A, TADA2L, TADA3L, ZZ3, MBIP, WDR5, YEATS2, CCDC101 and DR1. Interacts via (ZZ-type zinc finger) with histone H3 in a methylation-independent manner and acetylation on 'Lys-4' (H3K4ac) moderately enhances the interaction.

It localises to the nucleus. Functionally, histone H3 reader that is required for the ATAC complex-mediated maintenance of histone acetylation and gene activation. Component of the ATAC complex, a complex with histone acetyltransferase activity on histones H3 and H4. This chain is ZZ-type zinc finger-containing protein 3 (Zzz3), found in Mus musculus (Mouse).